A 519-amino-acid chain; its full sequence is Cell division cycle protein 20 homolog B (519 aa).

Residues 79–98 show a composition bias toward polar residues; sequence QSQTRALSSDSFGEEQSTTY. Residues 79–133 are disordered; sequence QSQTRALSSDSFGEEQSTTYLPEASGSVLKTPPEKETLTLGSRKEQLKTPSKGIS. Residues 110-125 are compositionally biased toward basic and acidic residues; the sequence is PPEKETLTLGSRKEQL. 7 WD repeats span residues 229–266, 271–310, 311–341, 353–392, 399–441, 443–484, and 487–519; these read RNDY…GIEN, LTCN…RLRN, MLGH…YHHD, RHKQ…SAQG, TQST…SIQT, STNS…RSGG, and GHRG…WNCY.

It belongs to the WD repeat CDC20/Fizzy family. As to expression, expressed in multiciliated cells (MCCs).

The protein resides in the cytoplasm. In terms of biological role, protein regulator of centriole-deuterosome disengagement and subsequently participates in the ciliogenesis in multiciliated cells (MCCs). This is Cell division cycle protein 20 homolog B from Homo sapiens (Human).